We begin with the raw amino-acid sequence, 190 residues long: dITP/XTP pyrophosphatase (190 aa).

Residue 7-12 (THNPNK) coordinates substrate. Residues E39 and D68 each contribute to the Mg(2+) site. Catalysis depends on D68, which acts as the Proton acceptor. Substrate is bound by residues T69, 148–151 (FGYD), K171, and 176–177 (HR).

Belongs to the HAM1 NTPase family. Homodimer. Mg(2+) is required as a cofactor.

The enzyme catalyses XTP + H2O = XMP + diphosphate + H(+). It catalyses the reaction dITP + H2O = dIMP + diphosphate + H(+). It carries out the reaction ITP + H2O = IMP + diphosphate + H(+). Its function is as follows. Pyrophosphatase that catalyzes the hydrolysis of nucleoside triphosphates to their monophosphate derivatives, with a high preference for the non-canonical purine nucleotides XTP (xanthosine triphosphate), dITP (deoxyinosine triphosphate) and ITP. Seems to function as a house-cleaning enzyme that removes non-canonical purine nucleotides from the nucleotide pool, thus preventing their incorporation into DNA/RNA and avoiding chromosomal lesions. The protein is dITP/XTP pyrophosphatase of Christiangramia forsetii (strain DSM 17595 / CGMCC 1.15422 / KT0803) (Gramella forsetii).